Consider the following 930-residue polypeptide: Isoleucine--tRNA ligase (930 aa).

The short motif at 57 to 67 (PYANGHLHLGH) is the 'HIGH' region element. E555 contacts L-isoleucyl-5'-AMP. The short motif at 596–600 (KMSKS) is the 'KMSKS' region element. K599 lines the ATP pocket. Zn(2+)-binding residues include C896, C899, C916, and C919.

Belongs to the class-I aminoacyl-tRNA synthetase family. IleS type 1 subfamily. As to quaternary structure, monomer. Requires Zn(2+) as cofactor.

Its subcellular location is the cytoplasm. It catalyses the reaction tRNA(Ile) + L-isoleucine + ATP = L-isoleucyl-tRNA(Ile) + AMP + diphosphate. Functionally, catalyzes the attachment of isoleucine to tRNA(Ile). As IleRS can inadvertently accommodate and process structurally similar amino acids such as valine, to avoid such errors it has two additional distinct tRNA(Ile)-dependent editing activities. One activity is designated as 'pretransfer' editing and involves the hydrolysis of activated Val-AMP. The other activity is designated 'posttransfer' editing and involves deacylation of mischarged Val-tRNA(Ile). The chain is Isoleucine--tRNA ligase from Moorella thermoacetica (strain ATCC 39073 / JCM 9320).